The following is a 309-amino-acid chain: Histone-lysine N-methyltransferase SETMAR (309 aa).

A Pre-SET domain is found at 74-137 (PGCACIETPC…RCRNRVVQNG (64 aa)). Positions 76, 78, 83, 88, 90, 119, 123, 125, and 129 each coordinate Zn(2+). One can recognise an SET domain in the interval 140–264 (FLLQVFQTEK…PGEELSYDYS (125 aa)). S-adenosyl-L-methionine-binding positions include 150–152 (KGW), tyrosine 193, arginine 221, and 224–225 (NH). Positions 227, 288, 290, and 295 each coordinate Zn(2+). The Post-SET domain maps to 284 to 300 (PRKPCYCGAQSCTTFLP).

It belongs to the class V-like SAM-binding methyltransferase superfamily.

It is found in the nucleus. It localises to the chromosome. It carries out the reaction L-lysyl(36)-[histone H3] + 2 S-adenosyl-L-methionine = N(6),N(6)-dimethyl-L-lysyl(36)-[histone H3] + 2 S-adenosyl-L-homocysteine + 2 H(+). Histone methyltransferase that methylates 'Lys-4' and 'Lys-36' of histone H3, 2 specific tags for epigenetic transcriptional activation. Specifically mediates dimethylation of H3 'Lys-36'. The protein is Histone-lysine N-methyltransferase SETMAR of Mus musculus (Mouse).